Consider the following 636-residue polypeptide: MDNRGHFSSNGNFPPQGYHRREQSQEGMRIGNHHGPFSSGNMRSIGGSAQNQQQRHWTNMLNGSNNVENSWVCFSGNTSLADDPNVLSNFSALAQQRVNHFDTIVQERDNRNASFLNGSAVGNNLNTSFSVFGNLRGGDQDHRVLSDHTGIYTGLGSTGQNAVGTGIRLAADVANGNFLEQRAPTAMGHNQSYSALNQSLAPTLLDQYNQALLDQYNQSSQMAQGRGYPAPNIAYGLQNAGFPAPQIAHRPNTQNADPQAMNMNNRLRDHTFQMPHTNAQVPMSSLPGLFNLSMNHGSGNQQFQMNQSSSGPAPQLPNLSESFQMAQGSSQVTMSSRPAHSNTSMNHSSRNQYNHVDQRPSRPAPHLPTLTKEEEAFLETPDFEQFGRQLYNYLLPGILPNGAADTFSDAPKHQLLKLAKTLKPMLYDYWRKTMQMQNRGANINIIQWIIDFNAKFAALNSSVAKASNSSDVLNQTLPTAAEVSDVAREDASTSQPSKSRSMYIRPAASLDNTLETLDENLDSSQSHAGPVPAASTKPKTPSFEKMIRYSGIKKRSTMDMDNFVRMLDEKINFSPEPSTSSDIASSVKGYMSQSFLHQQDDEAPDCTKNVHSESDLKQAEPQESDKQSDKELPSNE.

Polar residues-rich tracts occupy residues 1–13 (MDNRGHFSSNGNF), 38–54 (SSGNMRSIGGSAQNQQQ), and 292–355 (LSMN…QYNH). Disordered regions lie at residues 1 to 54 (MDNR…NQQQ), 289 to 367 (LFNL…APHL), 484 to 504 (SDVAREDASTSQPSKSRSMYI), and 521 to 542 (LDSSQSHAGPVPAASTKPKTPS). Position 574 is a phosphoserine; by mbk-2 (Ser574). A disordered region spans residues 591–636 (MSQSFLHQQDDEAPDCTKNVHSESDLKQAEPQESDKQSDKELPSNE). The span at 608-636 (KNVHSESDLKQAEPQESDKQSDKELPSNE) shows a compositional bias: basic and acidic residues.

As to quaternary structure, interacts with pptr-1, pptr-2 and pgl-1. Phosphorylated by mbk-2, which promotes the disassembly of zygotic P granules in the anterior cytoplasm of pre-gastrulation embryos. Dephosphorylated by a phosphatase complex containing the PP2A regulatory subunit pptr-1, which promotes the assembly and accumulation of zygotic P granules in the posterior cytoplasm of pre-gastrulation embryos. In terms of tissue distribution, not expressed in the adult germline or in any somatic tissues.

The protein localises to the cytoplasmic granule. Functionally, p granule component, which acts redundantly with P granule component meg-2 to promote P granule segregation during embryogenesis, and germ cell proliferation and differentiation in larval stages. In its phosphorylated form, and together with meg-2, promotes the disassembly of zygotic P granules in the anterior cytoplasm of pre-gastrulation embryos. In its dephosphorylated form, and together with meg-2, promotes the assembly and accumulation of zygotic P granules in the posterior cytoplasm of pre-gastrulation embryos. May function with the nanos family members nos-2 and nos-3 to promote germ cell proliferation during larval development. Required for fertility. The polypeptide is Protein meg-1 (Caenorhabditis elegans).